The sequence spans 211 residues: Large ribosomal subunit protein uL3 (211 aa).

Residue glutamine 150 is modified to N5-methylglutamine.

Belongs to the universal ribosomal protein uL3 family. Part of the 50S ribosomal subunit. Forms a cluster with proteins L14 and L19. Methylated by PrmB.

One of the primary rRNA binding proteins, it binds directly near the 3'-end of the 23S rRNA, where it nucleates assembly of the 50S subunit. This chain is Large ribosomal subunit protein uL3, found in Pseudomonas entomophila (strain L48).